The primary structure comprises 213 residues: UPF0111 protein TM_0914 (213 aa).

Belongs to the UPF0111 family.

In Thermotoga maritima (strain ATCC 43589 / DSM 3109 / JCM 10099 / NBRC 100826 / MSB8), this protein is UPF0111 protein TM_0914.